Consider the following 402-residue polypeptide: Type II NADH:quinone oxidoreductase (402 aa).

FAD is bound by residues 12–16, 39–40, and Val-83; these read GAGYA and NK. The active site involves Glu-172. FAD is bound by residues Asp-302, 319 to 320, and Lys-379; that span reads AQ.

This sequence belongs to the NADH dehydrogenase family. FAD is required as a cofactor.

The protein localises to the cell membrane. It carries out the reaction a quinone + NADH + H(+) = a quinol + NAD(+). Its function is as follows. Alternative, nonproton pumping NADH:quinone oxidoreductase that delivers electrons to the respiratory chain by oxidation of NADH and reduction of quinones, and contributes to the regeneration of NAD(+). The polypeptide is Type II NADH:quinone oxidoreductase (Staphylococcus aureus (strain bovine RF122 / ET3-1)).